The sequence spans 47 residues: Photosystem II reaction center protein K (47 aa).

A propeptide spanning residues 1 to 10 (MAPLTLDLLA) is cleaved from the precursor. A helical transmembrane segment spans residues 26-46 (LPLIPLLFFLLVFVWQAAVGF).

Belongs to the PsbK family. In terms of assembly, PSII is composed of 1 copy each of membrane proteins PsbA, PsbB, PsbC, PsbD, PsbE, PsbF, PsbH, PsbI, PsbJ, PsbK, PsbL, PsbM, PsbT, PsbX, PsbY, Psb30/Ycf12, peripheral proteins PsbO, CyanoQ (PsbQ), PsbU, PsbV and a large number of cofactors. It forms dimeric complexes.

Its subcellular location is the cellular thylakoid membrane. Its function is as follows. One of the components of the core complex of photosystem II (PSII). PSII is a light-driven water:plastoquinone oxidoreductase that uses light energy to abstract electrons from H(2)O, generating O(2) and a proton gradient subsequently used for ATP formation. It consists of a core antenna complex that captures photons, and an electron transfer chain that converts photonic excitation into a charge separation. In Prochlorococcus marinus (strain SARG / CCMP1375 / SS120), this protein is Photosystem II reaction center protein K.